Reading from the N-terminus, the 597-residue chain is Kelch-like protein 21 (597 aa).

In terms of domain architecture, BTB spans 35 to 103 (LDVTLEAAGG…SYTGRVAVSG (69 aa)). Positions 138–239 (CLDMQDFAEA…RRFYLLAHVE (102 aa)) constitute a BACK domain. Kelch repeat units follow at residues 287 to 335 (ILVL…ALGN), 336 to 382 (DIYV…VLDG), 384 to 422 (LYVV…ACRG), 423 to 470 (RLYA…TLNG), 472 to 512 (MYFV…VLGG), and 513 to 560 (KLYV…SIFR). The tract at residues 570–597 (GRGFELNSGSNDVDAGYHRLPQNPEELH) is disordered.

Component of the BCR(KLHL21) E3 ubiquitin ligase complex, at least composed of CUL3, KLHL21 and RBX1.

The protein resides in the cytoplasm. The protein localises to the cytoskeleton. It localises to the spindle. It participates in protein modification; protein ubiquitination. Functionally, substrate-specific adapter of a BCR (BTB-CUL3-RBX1) E3 ubiquitin-protein ligase complex required for efficient chromosome alignment and cytokinesis. The BCR(KLHL21) E3 ubiquitin ligase complex regulates localization of the chromosomal passenger complex (CPC) from chromosomes to the spindle midzone in anaphase and mediates the ubiquitination of AURKB. Ubiquitination of AURKB by BCR(KLHL21) E3 ubiquitin ligase complex may not lead to its degradation by the proteasome. This is Kelch-like protein 21 (Klhl21) from Mus musculus (Mouse).